The primary structure comprises 258 residues: Acyl-[acyl-carrier-protein]--UDP-N-acetylglucosamine O-acyltransferase (258 aa).

The protein belongs to the transferase hexapeptide repeat family. LpxA subfamily. In terms of assembly, homotrimer.

It localises to the cytoplasm. It catalyses the reaction a (3R)-hydroxyacyl-[ACP] + UDP-N-acetyl-alpha-D-glucosamine = a UDP-3-O-[(3R)-3-hydroxyacyl]-N-acetyl-alpha-D-glucosamine + holo-[ACP]. The protein operates within glycolipid biosynthesis; lipid IV(A) biosynthesis; lipid IV(A) from (3R)-3-hydroxytetradecanoyl-[acyl-carrier-protein] and UDP-N-acetyl-alpha-D-glucosamine: step 1/6. Its function is as follows. Involved in the biosynthesis of lipid A, a phosphorylated glycolipid that anchors the lipopolysaccharide to the outer membrane of the cell. In Pseudomonas entomophila (strain L48), this protein is Acyl-[acyl-carrier-protein]--UDP-N-acetylglucosamine O-acyltransferase.